A 287-amino-acid chain; its full sequence is Transmembrane protein 163 (287 aa).

The interval 1–63 (METAAGSERR…ESGQFSDGLE (63 aa)) is disordered. Residues 1–86 (METAAGSERR…HEAQNYRKKA (86 aa)) lie on the Cytoplasmic side of the membrane. Phosphoserine is present on residues Ser11, Ser53, Ser55, and Ser59. The required for interaction with MCOLN1 stretch occupies residues 40-70 (EPPQPEEERQLRISESGQFSDGLEDRGLLES). Residues 87 to 107 (LWVSWFSIIVTLALAVAAFTV) traverse the membrane as a helical segment. Topologically, residues 108–114 (SVMRYSA) are extracellular. The chain crosses the membrane as a helical span at residues 115-135 (SAFGFAFDAILDVLSSAIVLW). The Cytoplasmic segment spans residues 136 to 148 (RYSNAAAVHSAHR). A helical transmembrane segment spans residues 149 to 169 (EYIACVILGVIFLLSSVCIVV). Residues 170-185 (KAIHDLSTKLLPEVDD) lie on the Extracellular side of the membrane. A helical membrane pass occupies residues 186-206 (FLFSVSILSGILCSILAVLKF). Residues 207 to 215 (MLGKVLTSR) lie on the Cytoplasmic side of the membrane. The chain crosses the membrane as a helical span at residues 216–236 (ALITDGFNSLVGGVMGFSILL). The Extracellular portion of the chain corresponds to 237 to 253 (SAEVFKHNSAVWYLDGS). The chain crosses the membrane as a helical span at residues 254–274 (IGVLIGLTIFAYGVKLLIDMV). At 275–287 (PRVRQTRHYEMFE) the chain is on the cytoplasmic side.

This sequence belongs to the TMEM163 family. Homodimer. Interacts with MCOLN1/TRPML1. Interacts with SLC30A1, SLC30A2, SLC30A3 and SLC30A4.

The protein localises to the cytoplasmic vesicle. It is found in the secretory vesicle. The protein resides in the synaptic vesicle membrane. Its subcellular location is the early endosome membrane. It localises to the late endosome membrane. The protein localises to the lysosome membrane. It is found in the cell membrane. It catalyses the reaction Zn(2+)(in) = Zn(2+)(out). Functionally, zinc ion transporter that mediates zinc efflux and plays a crucial role in intracellular zinc homeostasis. Binds the divalent cations Zn(2+), Ni(2+), and to a minor extent Cu(2+). Is a functional modulator of P2X purinoceptors, including P2RX1, P2RX3, P2RX4 and P2RX7. Plays a role in central nervous system development and is required for myelination, and survival and proliferation of oligodendrocytes. The polypeptide is Transmembrane protein 163 (TMEM163) (Bos taurus (Bovine)).